A 228-amino-acid chain; its full sequence is Histone H1-III (228 aa).

Residues 1-18 (MSDPAPEVASAVPVASPA) are compositionally biased toward low complexity. Disordered stretches follow at residues 1–44 (MSDP…PPVS) and 98–228 (LQTK…AKKA). The region spanning 39–113 (THPPVSEMVV…GASGSFKLPA (75 aa)) is the H15 domain. Positions 115 to 133 (AKKEKVAKTPKKAAGEKKP) are enriched in basic and acidic residues. 2 stretches are compositionally biased toward basic residues: residues 148-170 (SIAK…KSTK) and 178-209 (AAKK…KVAA). Residues 211-221 (KPAEKKPEAAK) show a composition bias toward basic and acidic residues.

Belongs to the histone H1/H5 family.

The protein localises to the nucleus. Its subcellular location is the chromosome. Histones H1 are necessary for the condensation of nucleosome chains into higher-order structures. The protein is Histone H1-III of Glyptotendipes barbipes (Midge).